A 192-amino-acid chain; its full sequence is Adenylate kinase (192 aa).

Residue 12 to 17 (GSGKTT) participates in ATP binding. Residues 34 to 63 (STGDLLRAQVASGSELGKTIDSFISKGNLV) form an NMP region. AMP is bound by residues Thr35, Arg40, 61–63 (NLV), 88–91 (GYPR), and Gln95. The tract at residues 130–136 (GRNRGAD) is LID. Arg131 contacts ATP. AMP-binding residues include Arg133 and Arg145. Arg173 contacts ATP.

Belongs to the adenylate kinase family. As to quaternary structure, monomer.

It localises to the cytoplasm. The catalysed reaction is AMP + ATP = 2 ADP. It participates in purine metabolism; AMP biosynthesis via salvage pathway; AMP from ADP: step 1/1. In terms of biological role, catalyzes the reversible transfer of the terminal phosphate group between ATP and AMP. Plays an important role in cellular energy homeostasis and in adenine nucleotide metabolism. The protein is Adenylate kinase of Campylobacter jejuni subsp. doylei (strain ATCC BAA-1458 / RM4099 / 269.97).